A 413-amino-acid polypeptide reads, in one-letter code: Alpha-ketoglutarate-dependent xanthine dioxygenase xan1 (413 aa).

A compositionally biased stretch (low complexity) spans 1–18 (MSATATTTVVEPPTTTLT). A disordered region spans residues 1–24 (MSATATTTVVEPPTTTLTGATEPP). Residues H183 and D185 each contribute to the Fe cation site. 2-oxoglutarate is bound by residues T228 and W362. A Fe cation-binding site is contributed by H377. R389 provides a ligand contact to 2-oxoglutarate.

It belongs to the TfdA dioxygenase family. Fe(2+) serves as cofactor.

It localises to the cytoplasm. Its subcellular location is the cytosol. The enzyme catalyses xanthine + 2-oxoglutarate + O2 = urate + succinate + CO2. In terms of biological role, alpha-ketoglutarate-dependent xanthine dioxygenase is a non-heme mononuclear Fe(2+) enzyme that decarboxylates alpha-ketoglutarate to succinate and CO(2) while hydroxylating xanthine to generate uric acid. Allows xanthine utilization as a nitrogen source. This chain is Alpha-ketoglutarate-dependent xanthine dioxygenase xan1 (xan1), found in Schizosaccharomyces pombe (strain 972 / ATCC 24843) (Fission yeast).